The following is a 668-amino-acid chain: Bifunctional polymyxin resistance protein ArnA (668 aa).

Positions 1-307 are formyltransferase ArnAFT; sequence MSAKTVVFAY…ELGLVDGSLL (307 aa). The active-site Proton donor; for formyltransferase activity is the His-106. Residues Arg-116 and 138–142 each bind (6R)-10-formyltetrahydrofolate; that span reads VKRAD. The segment at 317-668 is dehydrogenase ArnADH; it reads RRTRVLILGV…IERPSNKEAC (352 aa). NAD(+) contacts are provided by residues Asp-350 and 371-372; that span reads DI. Residues Ala-396, Tyr-401, and 435 to 436 each bind UDP-alpha-D-glucuronate; that span reads TS. Catalysis depends on Glu-437, which acts as the Proton acceptor; for decarboxylase activity. Residues Arg-463, Asn-494, 528 to 537, and Tyr-615 each bind UDP-alpha-D-glucuronate; that span reads RLFDGGEQKR. Arg-621 (proton donor; for decarboxylase activity) is an active-site residue.

The protein in the N-terminal section; belongs to the Fmt family. UDP-L-Ara4N formyltransferase subfamily. It in the C-terminal section; belongs to the NAD(P)-dependent epimerase/dehydratase family. UDP-glucuronic acid decarboxylase subfamily. Homohexamer, formed by a dimer of trimers.

The enzyme catalyses UDP-alpha-D-glucuronate + NAD(+) = UDP-beta-L-threo-pentopyranos-4-ulose + CO2 + NADH. It catalyses the reaction UDP-4-amino-4-deoxy-beta-L-arabinose + (6R)-10-formyltetrahydrofolate = UDP-4-deoxy-4-formamido-beta-L-arabinose + (6S)-5,6,7,8-tetrahydrofolate + H(+). Its pathway is nucleotide-sugar biosynthesis; UDP-4-deoxy-4-formamido-beta-L-arabinose biosynthesis; UDP-4-deoxy-4-formamido-beta-L-arabinose from UDP-alpha-D-glucuronate: step 1/3. The protein operates within nucleotide-sugar biosynthesis; UDP-4-deoxy-4-formamido-beta-L-arabinose biosynthesis; UDP-4-deoxy-4-formamido-beta-L-arabinose from UDP-alpha-D-glucuronate: step 3/3. It participates in bacterial outer membrane biogenesis; lipopolysaccharide biosynthesis. In terms of biological role, bifunctional enzyme that catalyzes the oxidative decarboxylation of UDP-glucuronic acid (UDP-GlcUA) to UDP-4-keto-arabinose (UDP-Ara4O) and the addition of a formyl group to UDP-4-amino-4-deoxy-L-arabinose (UDP-L-Ara4N) to form UDP-L-4-formamido-arabinose (UDP-L-Ara4FN). The modified arabinose is attached to lipid A and is required for resistance to polymyxin and cationic antimicrobial peptides. This Pseudomonas fluorescens (strain Pf0-1) protein is Bifunctional polymyxin resistance protein ArnA.